The sequence spans 94 residues: DNA-directed RNA polymerase subunit omega (94 aa).

It belongs to the RNA polymerase subunit omega family. In terms of assembly, the RNAP catalytic core consists of 2 alpha, 1 beta, 1 beta' and 1 omega subunit. When a sigma factor is associated with the core the holoenzyme is formed, which can initiate transcription.

The catalysed reaction is RNA(n) + a ribonucleoside 5'-triphosphate = RNA(n+1) + diphosphate. Functionally, promotes RNA polymerase assembly. Latches the N- and C-terminal regions of the beta' subunit thereby facilitating its interaction with the beta and alpha subunits. The chain is DNA-directed RNA polymerase subunit omega from Frankia casuarinae (strain DSM 45818 / CECT 9043 / HFP020203 / CcI3).